An 87-amino-acid chain; its full sequence is UPF0367 protein Pro_0144 (87 aa).

This sequence belongs to the UPF0367 family.

This chain is UPF0367 protein Pro_0144, found in Prochlorococcus marinus (strain SARG / CCMP1375 / SS120).